A 436-amino-acid polypeptide reads, in one-letter code: Chromosomal replication initiator protein DnaA (436 aa).

The domain I, interacts with DnaA modulators stretch occupies residues 1–69 (MLADEVIELL…ANIFEVKTGI (69 aa)). The tract at residues 69–99 (IKPVISITTQKNRVSIKAKDIDVKQIRTQSS) is domain II. Residues 100 to 314 (LLNPSYTFES…SAIININAFA (215 aa)) form a domain III, AAA+ region region. Glycine 144, glycine 146, lysine 147, and threonine 148 together coordinate ATP. The interval 315 to 436 (NIMRQEITLE…ELKNKITSKE (122 aa)) is domain IV, binds dsDNA.

It belongs to the DnaA family. In terms of assembly, oligomerizes as a right-handed, spiral filament on DNA at oriC.

The protein localises to the cytoplasm. Its function is as follows. Plays an essential role in the initiation and regulation of chromosomal replication. ATP-DnaA binds to the origin of replication (oriC) to initiate formation of the DNA replication initiation complex once per cell cycle. Binds the DnaA box (a 9 base pair repeat at the origin) and separates the double-stranded (ds)DNA. Forms a right-handed helical filament on oriC DNA; dsDNA binds to the exterior of the filament while single-stranded (ss)DNA is stabiized in the filament's interior. The ATP-DnaA-oriC complex binds and stabilizes one strand of the AT-rich DNA unwinding element (DUE), permitting loading of DNA polymerase. After initiation quickly degrades to an ADP-DnaA complex that is not apt for DNA replication. Binds acidic phospholipids. The protein is Chromosomal replication initiator protein DnaA of Campylobacter fetus subsp. fetus (strain 82-40).